Reading from the N-terminus, the 321-residue chain is Beta-ketoacyl-[acyl-carrier-protein] synthase III (321 aa).

Active-site residues include Cys115 and His248. The interval 249–253 (QANIR) is ACP-binding. Asn278 is an active-site residue.

Belongs to the thiolase-like superfamily. FabH family. As to quaternary structure, homodimer.

It is found in the cytoplasm. It carries out the reaction malonyl-[ACP] + acetyl-CoA + H(+) = 3-oxobutanoyl-[ACP] + CO2 + CoA. It functions in the pathway lipid metabolism; fatty acid biosynthesis. Functionally, catalyzes the condensation reaction of fatty acid synthesis by the addition to an acyl acceptor of two carbons from malonyl-ACP. Catalyzes the first condensation reaction which initiates fatty acid synthesis and may therefore play a role in governing the total rate of fatty acid production. Possesses both acetoacetyl-ACP synthase and acetyl transacylase activities. Its substrate specificity determines the biosynthesis of branched-chain and/or straight-chain of fatty acids. In Azoarcus sp. (strain BH72), this protein is Beta-ketoacyl-[acyl-carrier-protein] synthase III.